A 218-amino-acid chain; its full sequence is Pyridoxine/pyridoxamine 5'-phosphate oxidase (218 aa).

Residues Arg-14–Tyr-17 and Lys-72 contribute to the substrate site. FMN-binding positions include Arg-67–Lys-72, Tyr-82–Thr-83, Arg-88, Lys-89, and Gln-111. The substrate site is built by Tyr-129, Arg-133, and Ser-137. Residues Gln-146–Ser-147 and Trp-191 contribute to the FMN site. Arg-197–His-199 is a binding site for substrate. Arg-201 contributes to the FMN binding site.

It belongs to the pyridoxamine 5'-phosphate oxidase family. In terms of assembly, homodimer. It depends on FMN as a cofactor.

It carries out the reaction pyridoxamine 5'-phosphate + O2 + H2O = pyridoxal 5'-phosphate + H2O2 + NH4(+). The enzyme catalyses pyridoxine 5'-phosphate + O2 = pyridoxal 5'-phosphate + H2O2. It functions in the pathway cofactor metabolism; pyridoxal 5'-phosphate salvage; pyridoxal 5'-phosphate from pyridoxamine 5'-phosphate: step 1/1. Its pathway is cofactor metabolism; pyridoxal 5'-phosphate salvage; pyridoxal 5'-phosphate from pyridoxine 5'-phosphate: step 1/1. Its function is as follows. Catalyzes the oxidation of either pyridoxine 5'-phosphate (PNP) or pyridoxamine 5'-phosphate (PMP) into pyridoxal 5'-phosphate (PLP). This is Pyridoxine/pyridoxamine 5'-phosphate oxidase from Escherichia coli O157:H7.